Reading from the N-terminus, the 366-residue chain is tRNA/tmRNA (uracil-C(5))-methyltransferase (366 aa).

Residues Q190, Y218, N223, E239, and D299 each contribute to the S-adenosyl-L-methionine site. C324 functions as the Nucleophile in the catalytic mechanism. Catalysis depends on E358, which acts as the Proton acceptor.

It belongs to the class I-like SAM-binding methyltransferase superfamily. RNA M5U methyltransferase family. TrmA subfamily.

It carries out the reaction uridine(54) in tRNA + S-adenosyl-L-methionine = 5-methyluridine(54) in tRNA + S-adenosyl-L-homocysteine + H(+). The catalysed reaction is uridine(341) in tmRNA + S-adenosyl-L-methionine = 5-methyluridine(341) in tmRNA + S-adenosyl-L-homocysteine + H(+). Its function is as follows. Dual-specificity methyltransferase that catalyzes the formation of 5-methyluridine at position 54 (m5U54) in all tRNAs, and that of position 341 (m5U341) in tmRNA (transfer-mRNA). The protein is tRNA/tmRNA (uracil-C(5))-methyltransferase of Cellvibrio japonicus (strain Ueda107) (Pseudomonas fluorescens subsp. cellulosa).